A 367-amino-acid chain; its full sequence is D-alanine--D-alanine ligase (367 aa).

The ATP-grasp domain occupies 150 to 357; it reads KKLLTAAGLP…YPTLLATMVE (208 aa). Residue 178 to 233 coordinates ATP; the sequence is RERLGLPVFVKPSRGGSSIGVSRVTAWDALPAAIELARRHDPKVIVEAAIPGRELE. Residues D312, E324, and N326 each coordinate Mg(2+).

The protein belongs to the D-alanine--D-alanine ligase family. Mg(2+) is required as a cofactor. It depends on Mn(2+) as a cofactor.

The protein localises to the cytoplasm. It catalyses the reaction 2 D-alanine + ATP = D-alanyl-D-alanine + ADP + phosphate + H(+). It functions in the pathway cell wall biogenesis; peptidoglycan biosynthesis. Functionally, cell wall formation. This Mycolicibacterium vanbaalenii (strain DSM 7251 / JCM 13017 / BCRC 16820 / KCTC 9966 / NRRL B-24157 / PYR-1) (Mycobacterium vanbaalenii) protein is D-alanine--D-alanine ligase.